We begin with the raw amino-acid sequence, 331 residues long: D-lactate dehydrogenase (331 aa).

Residues 156–157, Asp-176, 206–207, 233–235, and Asp-259 each bind NAD(+); these read RI, MP, and TAR. Residue Arg-235 is part of the active site. The active site involves Glu-264. The Proton donor role is filled by His-296.

The protein belongs to the D-isomer specific 2-hydroxyacid dehydrogenase family.

The catalysed reaction is (R)-lactate + NAD(+) = pyruvate + NADH + H(+). The polypeptide is D-lactate dehydrogenase (ldhD) (Treponema pallidum (strain Nichols)).